Reading from the N-terminus, the 444-residue chain is ATP-dependent RNA helicase DBP8 (444 aa).

Positions Gln-3–Ser-31 match the Q motif motif. The region spanning Ile-34–Pro-210 is the Helicase ATP-binding domain. Ala-47–Thr-54 serves as a coordination point for ATP. A DEAD box motif is present at residues Asp-156–Asp-159. The 147-residue stretch at Tyr-244–Val-390 folds into the Helicase C-terminal domain. Basic and acidic residues predominate over residues Lys-402–Arg-418. Residues Lys-402–Ser-444 are disordered. The span at Arg-434–Ser-444 shows a compositional bias: basic residues.

This sequence belongs to the DEAD box helicase family. DDX49/DBP8 subfamily.

The protein resides in the nucleus. It is found in the nucleolus. The enzyme catalyses ATP + H2O = ADP + phosphate + H(+). Functionally, ATP-binding RNA helicase involved in 40S ribosomal subunit biogenesis and is required for the normal formation of 18S rRNAs through pre-rRNA processing at A0, A1 and A2 sites. Required for vegetative growth. This Lodderomyces elongisporus (strain ATCC 11503 / CBS 2605 / JCM 1781 / NBRC 1676 / NRRL YB-4239) (Yeast) protein is ATP-dependent RNA helicase DBP8 (DBP8).